The sequence spans 308 residues: Nodulation protein D 1 (308 aa).

The 58-residue stretch at 6–63 (LDLNLLVALDALMTERKLTAAARRINLSQPAMSAAIARLRTYFGDELFSMQGRELIPT) folds into the HTH lysR-type domain. Residues 23 to 42 (LTAAARRINLSQPAMSAAIA) constitute a DNA-binding region (H-T-H motif).

This sequence belongs to the LysR transcriptional regulatory family.

NodD regulates the expression of the nodABCFE genes which encode other nodulation proteins. NodD is also a negative regulator of its own expression. Binds flavonoids as inducers. The protein is Nodulation protein D 1 (nodD1) of Rhizobium meliloti (strain 1021) (Ensifer meliloti).